We begin with the raw amino-acid sequence, 156 residues long: Arginine repressor (156 aa).

The protein belongs to the ArgR family.

The protein localises to the cytoplasm. It participates in amino-acid biosynthesis; L-arginine biosynthesis [regulation]. Functionally, regulates arginine biosynthesis genes. The protein is Arginine repressor of Cronobacter sakazakii (strain ATCC BAA-894) (Enterobacter sakazakii).